A 274-amino-acid chain; its full sequence is Large ribosomal subunit protein uL2 (274 aa).

The disordered stretch occupies residues 224 to 259; sequence AMNPVDHPHGGGEGRTSGGRHPVTPWGIPTKGYKTR.

This sequence belongs to the universal ribosomal protein uL2 family. In terms of assembly, part of the 50S ribosomal subunit. Forms a bridge to the 30S subunit in the 70S ribosome.

Functionally, one of the primary rRNA binding proteins. Required for association of the 30S and 50S subunits to form the 70S ribosome, for tRNA binding and peptide bond formation. It has been suggested to have peptidyltransferase activity; this is somewhat controversial. Makes several contacts with the 16S rRNA in the 70S ribosome. The protein is Large ribosomal subunit protein uL2 of Citrifermentans bemidjiense (strain ATCC BAA-1014 / DSM 16622 / JCM 12645 / Bem) (Geobacter bemidjiensis).